A 371-amino-acid chain; its full sequence is Maltose/maltodextrin import ATP-binding protein MalK (371 aa).

In terms of domain architecture, ABC transporter spans 4–234 (VQLQNVTKAW…PADRFVAGFI (231 aa)). Residue 36-43 (GPSGCGKS) participates in ATP binding.

It belongs to the ABC transporter superfamily. Maltooligosaccharide importer (TC 3.A.1.1.1) family. As to quaternary structure, the complex is composed of two ATP-binding proteins (MalK), two transmembrane proteins (MalG and MalK) and a solute-binding protein (MalE).

It localises to the cell inner membrane. The enzyme catalyses D-maltose(out) + ATP + H2O = D-maltose(in) + ADP + phosphate + H(+). Functionally, part of the ABC transporter complex MalEFGK involved in maltose/maltodextrin import. Responsible for energy coupling to the transport system. This Escherichia coli O6:K15:H31 (strain 536 / UPEC) protein is Maltose/maltodextrin import ATP-binding protein MalK.